A 141-amino-acid chain; its full sequence is Nucleoside diphosphate kinase (141 aa).

Residues Lys11, Phe59, Arg87, Thr93, Arg104, and Asn114 each coordinate ATP. His117 serves as the catalytic Pros-phosphohistidine intermediate.

This sequence belongs to the NDK family. Homotetramer. Mg(2+) is required as a cofactor.

It localises to the cytoplasm. It carries out the reaction a 2'-deoxyribonucleoside 5'-diphosphate + ATP = a 2'-deoxyribonucleoside 5'-triphosphate + ADP. The enzyme catalyses a ribonucleoside 5'-diphosphate + ATP = a ribonucleoside 5'-triphosphate + ADP. Major role in the synthesis of nucleoside triphosphates other than ATP. The ATP gamma phosphate is transferred to the NDP beta phosphate via a ping-pong mechanism, using a phosphorylated active-site intermediate. The polypeptide is Nucleoside diphosphate kinase (Bordetella petrii (strain ATCC BAA-461 / DSM 12804 / CCUG 43448)).